The following is a 250-amino-acid chain: DSC E3 ubiquitin ligase complex subunit 3 (250 aa).

Residues 105 to 130 (LASQDQAQSGLNSNSESPDDLQNAQT) are disordered. The segment covering 107 to 130 (SQDQAQSGLNSNSESPDDLQNAQT) has biased composition (polar residues). N187 carries an N-linked (GlcNAc...) asparagine glycan. 2 helical membrane-spanning segments follow: residues 199–219 (TLLA…YFLW) and 228–248 (MQLS…LHSY).

The protein belongs to the dsc3 family. In terms of assembly, component of the DSC E3 ubiquitin ligase complex composed of dsc1, dsc2, dsc3 and dsc4.

The protein resides in the endoplasmic reticulum membrane. It localises to the golgi apparatus membrane. It participates in protein modification; protein ubiquitination. Functionally, component of the DSC E3 ubiquitin ligase complex which is required for the sre1 transcriptional activator proteolytic cleavage to release the soluble transcription factor from the membrane in low oxygen or sterol conditions. The complex also plays an important role in the multivesicular body (MVB) pathway and functions in a post-endoplasmic reticulum pathway for protein degradation. This Schizosaccharomyces pombe (strain 972 / ATCC 24843) (Fission yeast) protein is DSC E3 ubiquitin ligase complex subunit 3 (dsc3).